A 464-amino-acid polypeptide reads, in one-letter code: ATP synthase subunit beta (464 aa).

Gly153–Thr160 serves as a coordination point for ATP.

This sequence belongs to the ATPase alpha/beta chains family. In terms of assembly, F-type ATPases have 2 components, CF(1) - the catalytic core - and CF(0) - the membrane proton channel. CF(1) has five subunits: alpha(3), beta(3), gamma(1), delta(1), epsilon(1). CF(0) has three main subunits: a(1), b(2) and c(9-12). The alpha and beta chains form an alternating ring which encloses part of the gamma chain. CF(1) is attached to CF(0) by a central stalk formed by the gamma and epsilon chains, while a peripheral stalk is formed by the delta and b chains.

Its subcellular location is the cell membrane. It catalyses the reaction ATP + H2O + 4 H(+)(in) = ADP + phosphate + 5 H(+)(out). Its function is as follows. Produces ATP from ADP in the presence of a proton gradient across the membrane. The catalytic sites are hosted primarily by the beta subunits. In Alkaliphilus metalliredigens (strain QYMF), this protein is ATP synthase subunit beta.